Reading from the N-terminus, the 463-residue chain is MTNVITRFAPSPTGFLHIGSARTALFNYLFARHHNGKFLLRIEDTDKERSTNEAVEAIFSGLKWLGLDWDGEVIFQSKRNDLYKETALKLLQAGKAYYCFTSQEEIEKQRQKALENKQYFIFNSDWRDKDPAAYPTDIKPVIRLKTPREGSITIRDTLQGDVVIENSHIDDMVLLRSDGTATYMLAVVVDDHDMGITHIIRGDDHLTNAARQIAIYQACGYAVPSMTHIPLIHGADGAKLSKRHGALGVAAYKDMGYLPESVCNYLLRLGWSHGDDEIISMDQAIKWFNLDSLGKSPAKLDFANMNSLNAHYLRLLDNDSATSKTVERLRQNYNVSKQEVIYINQAIRSLLVRSETLLDLVQLAQIYLVDSPIIYKQDAKEIIENCDKDLIKQVIENLNKLKQFDKESVQNKFKEIATHNGLKLNELMKPVRALITGMTASPSVFEIAEILGKENILKRLKII.

Residues 10–20 carry the 'HIGH' region motif; the sequence is PSPTGFLHIGS. The short motif at 239–243 is the 'KMSKS' region element; the sequence is KLSKR. Position 242 (Lys242) interacts with ATP.

The protein belongs to the class-I aminoacyl-tRNA synthetase family. Glutamate--tRNA ligase type 1 subfamily. Monomer.

The protein localises to the cytoplasm. The enzyme catalyses tRNA(Glu) + L-glutamate + ATP = L-glutamyl-tRNA(Glu) + AMP + diphosphate. Functionally, catalyzes the attachment of glutamate to tRNA(Glu) in a two-step reaction: glutamate is first activated by ATP to form Glu-AMP and then transferred to the acceptor end of tRNA(Glu). The protein is Glutamate--tRNA ligase 1 of Rickettsia canadensis (strain McKiel).